Here is a 319-residue protein sequence, read N- to C-terminus: Lipase 1 (319 aa).

Catalysis depends on Ser-189, which acts as the Nucleophile. Residues Asp-314 and Asp-317 each contribute to the Ca(2+) site.

It catalyses the reaction a triacylglycerol + H2O = a diacylglycerol + a fatty acid + H(+). The chain is Lipase 1 (lip1) from Moraxella sp. (strain TA144).